The chain runs to 360 residues: Protein DVR-1 (360 aa).

The first 16 residues, Met-1–Val-16, serve as a signal peptide directing secretion. A propeptide spanning residues Thr-17–Arg-246 is cleaved from the precursor. N-linked (GlcNAc...) asparagine glycans are attached at residues Asn-113, Asn-181, and Asn-301. Disulfide bonds link Cys-259/Cys-325, Cys-288/Cys-357, and Cys-292/Cys-359.

Belongs to the TGF-beta family. Homodimer. Vegetal region of the egg.

The protein resides in the secreted. Its function is as follows. Serves to facilitate the differentiation of either mesoderm or endoderm either as a cofactor in an instructive signal or by providing permissive environment. The sequence is that of Protein DVR-1 (dvr1) from Xenopus laevis (African clawed frog).